We begin with the raw amino-acid sequence, 350 residues long: Phenylalanine--tRNA ligase alpha subunit (350 aa).

A Mg(2+)-binding site is contributed by E257.

The protein belongs to the class-II aminoacyl-tRNA synthetase family. Phe-tRNA synthetase alpha subunit type 1 subfamily. As to quaternary structure, tetramer of two alpha and two beta subunits. It depends on Mg(2+) as a cofactor.

The protein resides in the cytoplasm. It catalyses the reaction tRNA(Phe) + L-phenylalanine + ATP = L-phenylalanyl-tRNA(Phe) + AMP + diphosphate + H(+). This is Phenylalanine--tRNA ligase alpha subunit from Listeria monocytogenes serovar 1/2a (strain ATCC BAA-679 / EGD-e).